The primary structure comprises 226 residues: V-type proton ATPase subunit E 1 (226 aa).

A2 carries the N-acetylalanine modification. Position 56 is a phosphotyrosine (Y56).

This sequence belongs to the V-ATPase E subunit family. As to quaternary structure, V-ATPase is a heteromultimeric enzyme made up of two complexes: the ATP-hydrolytic V1 complex and the proton translocation V0 complex. The V1 complex consists of three catalytic AB heterodimers that form a heterohexamer, three peripheral stalks each consisting of EG heterodimers, one central rotor including subunits D and F, and the regulatory subunits C and H. The proton translocation complex V0 consists of the proton transport subunit a, a ring of proteolipid subunits c9c'', rotary subunit d, subunits e and f, and the accessory subunits ATP6AP1/Ac45 and ATP6AP2/PRR. Interacts with RABL2/RABL2A; binds preferentially to GTP-bound RABL2. Interacts with ALDOC. Interacts with RAB11B. Expressed within the midpiece of sperm tail (at protein level). Kidney; localizes to early distal nephron, encompassing thick ascending limbs and distal convoluted tubules (at protein level).

It is found in the apical cell membrane. Its subcellular location is the cytoplasmic vesicle. It localises to the secretory vesicle. The protein localises to the synaptic vesicle membrane. The protein resides in the clathrin-coated vesicle membrane. In terms of biological role, subunit of the V1 complex of vacuolar(H+)-ATPase (V-ATPase), a multisubunit enzyme composed of a peripheral complex (V1) that hydrolyzes ATP and a membrane integral complex (V0) that translocates protons. V-ATPase is responsible for acidifying and maintaining the pH of intracellular compartments and in some cell types, is targeted to the plasma membrane, where it is responsible for acidifying the extracellular environment. This chain is V-type proton ATPase subunit E 1 (Atp6v1e1), found in Mus musculus (Mouse).